Consider the following 439-residue polypeptide: Acyl transferase 4 (439 aa).

Active-site proton acceptor residues include H166 and D382.

It belongs to the plant acyltransferase family.

In terms of biological role, grass-specific monolignol p-coumaroyl transferase involved in the biosynthesis of acylated monolignols or monolignol conjugates that serve as monomer precursors of lignin. Can synthesize sinapyl p-coumarate, p-coumaryl p-coumarate, sinapyl caffeate and p-coumaryl caffeate in vitro. The polypeptide is Acyl transferase 4 (Oryza sativa subsp. japonica (Rice)).